Here is a 234-residue protein sequence, read N- to C-terminus: MNNKPIVVALDFDDKNAALQLIDRLDPQMCRLKVGKEMFTLFGPELVKDIHSRDFDLFLDLKFHDIPNTVAKAVTAAAELGVWMTNIHATGGLAMMEAAKKALVPYGKDAPLLIAVTVLTSMSDEDLKLIGIDVPAFEHVQRLARLTQQAGLDGVVCSAHEAQLLKSSLGESFKLVTPGIRPAGADKGDQHRVMTPPQAIEAGSDYLVIGRPITKAADPLAALTAIHQSLSIPG.

Residues Asp11, Lys33, 60–69 (DLKFHDIPNT), Thr120, Arg181, Gln190, Gly210, and Arg211 each bind substrate. Lys62 (proton donor) is an active-site residue.

Belongs to the OMP decarboxylase family. Type 1 subfamily. In terms of assembly, homodimer.

It catalyses the reaction orotidine 5'-phosphate + H(+) = UMP + CO2. It participates in pyrimidine metabolism; UMP biosynthesis via de novo pathway; UMP from orotate: step 2/2. Functionally, catalyzes the decarboxylation of orotidine 5'-monophosphate (OMP) to uridine 5'-monophosphate (UMP). The chain is Orotidine 5'-phosphate decarboxylase from Shewanella sediminis (strain HAW-EB3).